The primary structure comprises 320 residues: Acetyl-coenzyme A carboxylase carboxyl transferase subunit alpha (320 aa).

Positions 34 to 288 constitute a CoA carboxyltransferase C-terminal domain; it reads RLEEALEAAR…GEALERVLAG (255 aa).

This sequence belongs to the AccA family. In terms of assembly, acetyl-CoA carboxylase is a heterohexamer composed of biotin carboxyl carrier protein (AccB), biotin carboxylase (AccC) and two subunits each of ACCase subunit alpha (AccA) and ACCase subunit beta (AccD).

The protein localises to the cytoplasm. It catalyses the reaction N(6)-carboxybiotinyl-L-lysyl-[protein] + acetyl-CoA = N(6)-biotinyl-L-lysyl-[protein] + malonyl-CoA. Its pathway is lipid metabolism; malonyl-CoA biosynthesis; malonyl-CoA from acetyl-CoA: step 1/1. Component of the acetyl coenzyme A carboxylase (ACC) complex. First, biotin carboxylase catalyzes the carboxylation of biotin on its carrier protein (BCCP) and then the CO(2) group is transferred by the carboxyltransferase to acetyl-CoA to form malonyl-CoA. The polypeptide is Acetyl-coenzyme A carboxylase carboxyl transferase subunit alpha (Rubrobacter xylanophilus (strain DSM 9941 / JCM 11954 / NBRC 16129 / PRD-1)).